Here is a 124-residue protein sequence, read N- to C-terminus: Histone H2B 1/2 (124 aa).

Positions 1 to 32 (MPEPAKAAPKKGSKKAVTKTAGKGGKKRKRTR) are disordered. Residues lysine 6 and lysine 11 each carry the N6-acetyllysine modification. Over residues 8 to 17 (APKKGSKKAV) the composition is skewed to basic residues. At serine 13 the chain carries Phosphoserine. Lysine 14 and lysine 19 each carry N6-acetyllysine. Serine 111 carries an O-linked (GlcNAc) serine glycan. Residue lysine 119 forms a Glycyl lysine isopeptide (Lys-Gly) (interchain with G-Cter in ubiquitin) linkage.

It belongs to the histone H2B family. As to quaternary structure, the nucleosome is a histone octamer containing two molecules each of H2A, H2B, H3 and H4 assembled in one H3-H4 heterotetramer and two H2A-H2B heterodimers. The octamer wraps approximately 147 bp of DNA. In terms of processing, monoubiquitination of Lys-119 by the BRE1 gives a specific tag for epigenetic transcriptional activation and is also prerequisite for histone H3 'Lys-4' and 'Lys-79' methylation. Post-translationally, phosphorylated during apoptosis; which facilitates apoptotic chromatin condensation. GlcNAcylation at Ser-111 promotes monoubiquitination of Lys-119. It fluctuates in response to extracellular glucose, and associates with transcribed genes.

The protein resides in the nucleus. The protein localises to the chromosome. In terms of biological role, core component of nucleosome. Nucleosomes wrap and compact DNA into chromatin, limiting DNA accessibility to the cellular machineries which require DNA as a template. Histones thereby play a central role in transcription regulation, DNA repair, DNA replication and chromosomal stability. DNA accessibility is regulated via a complex set of post-translational modifications of histones, also called histone code, and nucleosome remodeling. The polypeptide is Histone H2B 1/2 (Danio rerio (Zebrafish)).